The chain runs to 506 residues: 2,3-bisphosphoglycerate-independent phosphoglycerate mutase (506 aa).

Positions 13 and 63 each coordinate Mn(2+). Catalysis depends on Ser-63, which acts as the Phosphoserine intermediate. Substrate is bound by residues His-124, 153–154 (RD), Arg-183, Arg-189, 254–257 (RADR), and Lys-330. 5 residues coordinate Mn(2+): Asp-396, His-400, Asp-437, His-438, and His-456.

The protein belongs to the BPG-independent phosphoglycerate mutase family. Monomer. The cofactor is Mn(2+).

It carries out the reaction (2R)-2-phosphoglycerate = (2R)-3-phosphoglycerate. It functions in the pathway carbohydrate degradation; glycolysis; pyruvate from D-glyceraldehyde 3-phosphate: step 3/5. Functionally, catalyzes the interconversion of 2-phosphoglycerate and 3-phosphoglycerate. The protein is 2,3-bisphosphoglycerate-independent phosphoglycerate mutase of Cereibacter sphaeroides (strain ATCC 17025 / ATH 2.4.3) (Rhodobacter sphaeroides).